Consider the following 507-residue polypeptide: ATP synthase subunit alpha, chloroplastic (507 aa).

Position 170 to 177 (170 to 177 (GDRQTGKT)) interacts with ATP.

This sequence belongs to the ATPase alpha/beta chains family. As to quaternary structure, F-type ATPases have 2 components, CF(1) - the catalytic core - and CF(0) - the membrane proton channel. CF(1) has five subunits: alpha(3), beta(3), gamma(1), delta(1), epsilon(1). CF(0) has four main subunits: a, b, b' and c.

The protein localises to the plastid. It is found in the chloroplast thylakoid membrane. It carries out the reaction ATP + H2O + 4 H(+)(in) = ADP + phosphate + 5 H(+)(out). Produces ATP from ADP in the presence of a proton gradient across the membrane. The alpha chain is a regulatory subunit. This Manihot esculenta (Cassava) protein is ATP synthase subunit alpha, chloroplastic.